Consider the following 71-residue polypeptide: Ribosome modulation factor (71 aa).

This sequence belongs to the ribosome modulation factor family.

The protein localises to the cytoplasm. Functionally, during stationary phase, converts 70S ribosomes to an inactive dimeric form (100S ribosomes). This chain is Ribosome modulation factor, found in Pseudomonas savastanoi pv. phaseolicola (strain 1448A / Race 6) (Pseudomonas syringae pv. phaseolicola (strain 1448A / Race 6)).